We begin with the raw amino-acid sequence, 218 residues long: Uracil-DNA glycosylase (218 aa).

The active-site Proton acceptor is the D60.

The protein belongs to the uracil-DNA glycosylase (UDG) superfamily. UNG family.

The protein resides in the cytoplasm. The enzyme catalyses Hydrolyzes single-stranded DNA or mismatched double-stranded DNA and polynucleotides, releasing free uracil.. In terms of biological role, excises uracil residues from the DNA which can arise as a result of misincorporation of dUMP residues by DNA polymerase or due to deamination of cytosine. In Shewanella oneidensis (strain ATCC 700550 / JCM 31522 / CIP 106686 / LMG 19005 / NCIMB 14063 / MR-1), this protein is Uracil-DNA glycosylase.